We begin with the raw amino-acid sequence, 106 residues long: UPF0145 protein APL_0465 (106 aa).

The protein belongs to the UPF0145 family.

The protein is UPF0145 protein APL_0465 of Actinobacillus pleuropneumoniae serotype 5b (strain L20).